The chain runs to 594 residues: Fidgetin-like protein 1 (594 aa).

Disordered stretches follow at residues methionine 1–leucine 79 and glutamine 239–serine 261. Residues proline 56–asparagine 73 are compositionally biased toward polar residues. ATP is bound by residues alanine 319 and glycine 359–methionine 364.

Belongs to the AAA ATPase family. As to quaternary structure, hexamer. The cofactor is Mg(2+). Expressed in germ cells.

The protein localises to the nucleus. The enzyme catalyses ATP + H2O = ADP + phosphate + H(+). Functionally, has a role in spindle assembly which acts in the progression through mitosis during embryogenesis. Required for fertility. The polypeptide is Fidgetin-like protein 1 (figl-1) (Caenorhabditis elegans).